The following is a 412-amino-acid chain: Protein trichome birefringence-like 13 (412 aa).

A helical; Signal-anchor for type II membrane protein membrane pass occupies residues 9–29; it reads PSLFPLLSLLCFISIFLLLSL. The short motif at 137–139 is the GDS motif element; the sequence is GDS. The short motif at 385-399 is the DCXHWCLPGXXDXWN motif element; that stretch reads DCMHWCLPGLTDTWN.

It belongs to the PC-esterase family. TBL subfamily.

It localises to the membrane. Functionally, may act as a bridging protein that binds pectin and other cell wall polysaccharides. Probably involved in maintaining esterification of pectins. May be involved in the specific O-acetylation of cell wall polymers. This is Protein trichome birefringence-like 13 (TBL13) from Arabidopsis thaliana (Mouse-ear cress).